The following is a 407-amino-acid chain: MKRTFIMVLDSFGIGASADANKFGDEGADTLGHIAEACARGEADIGRSGPLTLPNLSRLGLGKAAEESTGKFPVGLDKNADIIGAYGYASELSSGKDTPSGHWEIAGVPVLFDWGYFSDVENSFPQELLDKLVKRANLPGYLGNCHSSGTVILDQLGEEHMKTGKPIFYTSADSVFQIACHEETFGLDRLYELCEIAREELTEGGYNIGRVIARPFIGDKPGNFQRTGNRHDLAVEPPAPTMLKKLVDEKGGEVVSIGKIADIYAHVGITQKVKATGLDALFDATIEEMKKAGDNTIVFTNFVDFDSSYGHRRDVAGYAAALELFDRRLPELMALVKEDDILLLTADHGCDPTWPGTDHTREHIPVLVYGPKVKPGSLGHRETFADIGQTVAKYFDLSPMDYGKNML.

Residues D10, D306, H311, D347, H348, and H359 each contribute to the Mn(2+) site.

The protein belongs to the phosphopentomutase family. Mn(2+) serves as cofactor.

The protein localises to the cytoplasm. It catalyses the reaction 2-deoxy-alpha-D-ribose 1-phosphate = 2-deoxy-D-ribose 5-phosphate. The enzyme catalyses alpha-D-ribose 1-phosphate = D-ribose 5-phosphate. It functions in the pathway carbohydrate degradation; 2-deoxy-D-ribose 1-phosphate degradation; D-glyceraldehyde 3-phosphate and acetaldehyde from 2-deoxy-alpha-D-ribose 1-phosphate: step 1/2. In terms of biological role, isomerase that catalyzes the conversion of deoxy-ribose 1-phosphate (dRib-1-P) and ribose 1-phosphate (Rib-1-P) to deoxy-ribose 5-phosphate (dRib-5-P) and ribose 5-phosphate (Rib-5-P), respectively. In Yersinia enterocolitica serotype O:8 / biotype 1B (strain NCTC 13174 / 8081), this protein is Phosphopentomutase.